The primary structure comprises 545 residues: Glucose-6-phosphate isomerase (545 aa).

The Proton donor role is filled by Glu351. Active-site residues include His382 and Lys510.

It belongs to the GPI family.

It localises to the cytoplasm. It carries out the reaction alpha-D-glucose 6-phosphate = beta-D-fructose 6-phosphate. It participates in carbohydrate biosynthesis; gluconeogenesis. Its pathway is carbohydrate degradation; glycolysis; D-glyceraldehyde 3-phosphate and glycerone phosphate from D-glucose: step 2/4. Its function is as follows. Catalyzes the reversible isomerization of glucose-6-phosphate to fructose-6-phosphate. This chain is Glucose-6-phosphate isomerase, found in Shewanella sp. (strain ANA-3).